Reading from the N-terminus, the 250-residue chain is Adenosylcobinamide-GDP ribazoletransferase (250 aa).

6 helical membrane-spanning segments follow: residues 33–53, 63–83, 109–129, 137–157, 180–200, and 203–223; these read IASYFPIVGIVIGGILSLFYI, IVMTFIVAFSYVLTGAMHIDG, LGTNGVLALVFMVVLKILFLT, LTALLITPIIGRLSIVFSMMI, FAIAFVISIATSYFILPLAVF, and ILTISLFVTYIVSKYISLRIG.

This sequence belongs to the CobS family. The cofactor is Mg(2+).

Its subcellular location is the cell membrane. It catalyses the reaction alpha-ribazole + adenosylcob(III)inamide-GDP = adenosylcob(III)alamin + GMP + H(+). The enzyme catalyses alpha-ribazole 5'-phosphate + adenosylcob(III)inamide-GDP = adenosylcob(III)alamin 5'-phosphate + GMP + H(+). It functions in the pathway cofactor biosynthesis; adenosylcobalamin biosynthesis; adenosylcobalamin from cob(II)yrinate a,c-diamide: step 7/7. In terms of biological role, joins adenosylcobinamide-GDP and alpha-ribazole to generate adenosylcobalamin (Ado-cobalamin). Also synthesizes adenosylcobalamin 5'-phosphate from adenosylcobinamide-GDP and alpha-ribazole 5'-phosphate. The chain is Adenosylcobinamide-GDP ribazoletransferase from Thermoanaerobacter sp. (strain X514).